The sequence spans 115 residues: Ribosome-binding factor A (115 aa).

Belongs to the RbfA family. In terms of assembly, monomer. Binds 30S ribosomal subunits, but not 50S ribosomal subunits or 70S ribosomes.

The protein localises to the cytoplasm. In terms of biological role, one of several proteins that assist in the late maturation steps of the functional core of the 30S ribosomal subunit. Associates with free 30S ribosomal subunits (but not with 30S subunits that are part of 70S ribosomes or polysomes). Required for efficient processing of 16S rRNA. May interact with the 5'-terminal helix region of 16S rRNA. This Staphylococcus carnosus (strain TM300) protein is Ribosome-binding factor A.